A 600-amino-acid polypeptide reads, in one-letter code: Aspartate--tRNA(Asp/Asn) ligase (600 aa).

Glu-174 contacts L-aspartate. The segment at 198 to 201 is aspartate; that stretch reads QLFK. Arg-220 is a binding site for L-aspartate. Residues 220–222 and Gln-229 contribute to the ATP site; that span reads RDE. His-457 lines the L-aspartate pocket. ATP is bound at residue Glu-491. Arg-498 is an L-aspartate binding site. 543–546 lines the ATP pocket; the sequence is GLDR.

The protein belongs to the class-II aminoacyl-tRNA synthetase family. Type 1 subfamily. In terms of assembly, homodimer.

It localises to the cytoplasm. The enzyme catalyses tRNA(Asx) + L-aspartate + ATP = L-aspartyl-tRNA(Asx) + AMP + diphosphate. In terms of biological role, aspartyl-tRNA synthetase with relaxed tRNA specificity since it is able to aspartylate not only its cognate tRNA(Asp) but also tRNA(Asn). Reaction proceeds in two steps: L-aspartate is first activated by ATP to form Asp-AMP and then transferred to the acceptor end of tRNA(Asp/Asn). The protein is Aspartate--tRNA(Asp/Asn) ligase of Burkholderia orbicola (strain AU 1054).